Here is an 81-residue protein sequence, read N- to C-terminus: Sulfur carrier protein TusA (81 aa).

The Cysteine persulfide intermediate role is filled by C19.

The protein belongs to the sulfur carrier protein TusA family. Interacts with IscS.

Its subcellular location is the cytoplasm. It functions in the pathway tRNA modification. In terms of biological role, sulfur carrier protein involved in sulfur trafficking in the cell. Part of a sulfur-relay system required for 2-thiolation during synthesis of 2-thiouridine of the modified wobble base 5-methylaminomethyl-2-thiouridine (mnm(5)s(2)U) in tRNA. Interacts with IscS and stimulates its cysteine desulfurase activity. Accepts an activated sulfur from IscS, which is then transferred to TusD, and thus determines the direction of sulfur flow from IscS to 2-thiouridine formation. Also appears to be involved in sulfur transfer for the biosynthesis of molybdopterin. This chain is Sulfur carrier protein TusA, found in Serratia proteamaculans (strain 568).